A 344-amino-acid polypeptide reads, in one-letter code: S-methyl-5'-thioadenosine phosphorylase (344 aa).

Phosphate is bound by residues T45, 88-89 (RH), and 121-122 (SA). Residue M238 coordinates substrate. A phosphate-binding site is contributed by S239. 262-264 (DYD) contributes to the substrate binding site.

This sequence belongs to the PNP/MTAP phosphorylase family. MTAP subfamily. As to quaternary structure, homotrimer.

It localises to the cytoplasm. It is found in the nucleus. It carries out the reaction S-methyl-5'-thioadenosine + phosphate = 5-(methylsulfanyl)-alpha-D-ribose 1-phosphate + adenine. The protein operates within amino-acid biosynthesis; L-methionine biosynthesis via salvage pathway; S-methyl-5-thio-alpha-D-ribose 1-phosphate from S-methyl-5'-thioadenosine (phosphorylase route): step 1/1. Functionally, catalyzes the reversible phosphorylation of S-methyl-5'-thioadenosine (MTA) to adenine and 5-methylthioribose-1-phosphate. Involved in the breakdown of MTA, a major by-product of polyamine biosynthesis. Responsible for the first step in the methionine salvage pathway after MTA has been generated from S-adenosylmethionine. Has broad substrate specificity with 6-aminopurine nucleosides as preferred substrates. This is S-methyl-5'-thioadenosine phosphorylase from Candida albicans (strain SC5314 / ATCC MYA-2876) (Yeast).